Here is a 79-residue protein sequence, read N- to C-terminus: Hemoglobin subunit zeta (79 aa).

The residue at position 1 (serine 1) is an N-acetylserine. The 79-residue stretch at 1 to 79 folds into the Globin domain; that stretch reads SLTKTXXTII…FKLLSHXFLV (79 aa). Phosphoserine is present on residues serine 38 and serine 53. Histidine 59 lines the heme b pocket.

This sequence belongs to the globin family. As to quaternary structure, heterotetramer of two zeta chains and two epsilon chains.

Its function is as follows. The zeta chain is an alpha-type chain of mammalian embryonic hemoglobin. This Notamacropus eugenii (Tammar wallaby) protein is Hemoglobin subunit zeta.